Consider the following 457-residue polypeptide: Argininosuccinate lyase (457 aa).

Belongs to the lyase 1 family. Argininosuccinate lyase subfamily.

It is found in the cytoplasm. It catalyses the reaction 2-(N(omega)-L-arginino)succinate = fumarate + L-arginine. The protein operates within amino-acid biosynthesis; L-arginine biosynthesis; L-arginine from L-ornithine and carbamoyl phosphate: step 3/3. This is Argininosuccinate lyase from Exiguobacterium sibiricum (strain DSM 17290 / CCUG 55495 / CIP 109462 / JCM 13490 / 255-15).